A 454-amino-acid chain; its full sequence is tRNA modification GTPase MnmE (454 aa).

Positions 23, 80, and 120 each coordinate (6S)-5-formyl-5,6,7,8-tetrahydrofolate. Positions 216–377 constitute a TrmE-type G domain; the sequence is GMKVVIAGRP…LRNHLKQSMG (162 aa). N226 serves as a coordination point for K(+). GTP-binding positions include 226-231, 245-251, 270-273, 335-338, and 358-360; these read NAGKSS, TDIAGTT, DTAG, NKAD, and SAR. Residue S230 coordinates Mg(2+). T245, I247, and T250 together coordinate K(+). T251 is a Mg(2+) binding site. Residue K454 coordinates (6S)-5-formyl-5,6,7,8-tetrahydrofolate.

It belongs to the TRAFAC class TrmE-Era-EngA-EngB-Septin-like GTPase superfamily. TrmE GTPase family. As to quaternary structure, homodimer. Heterotetramer of two MnmE and two MnmG subunits. K(+) serves as cofactor.

The protein localises to the cytoplasm. In terms of biological role, exhibits a very high intrinsic GTPase hydrolysis rate. Involved in the addition of a carboxymethylaminomethyl (cmnm) group at the wobble position (U34) of certain tRNAs, forming tRNA-cmnm(5)s(2)U34. The sequence is that of tRNA modification GTPase MnmE from Klebsiella pneumoniae (strain 342).